We begin with the raw amino-acid sequence, 439 residues long: GTPase Der (439 aa).

EngA-type G domains are found at residues Ala-4 to Asp-169 and Ile-177 to Asn-352. Residues Gly-10–Ser-17, Asp-57–Leu-61, Asn-120–Asp-123, Gly-183–Ser-190, Asp-230–Ile-234, and Asn-295–Asp-298 each bind GTP. The KH-like domain maps to Lys-353 to Gly-437.

Belongs to the TRAFAC class TrmE-Era-EngA-EngB-Septin-like GTPase superfamily. EngA (Der) GTPase family. As to quaternary structure, associates with the 50S ribosomal subunit.

In terms of biological role, GTPase that plays an essential role in the late steps of ribosome biogenesis. This is GTPase Der from Caldanaerobacter subterraneus subsp. tengcongensis (strain DSM 15242 / JCM 11007 / NBRC 100824 / MB4) (Thermoanaerobacter tengcongensis).